The primary structure comprises 452 residues: Bifunctional protein GlmU (452 aa).

The segment at 1–225 (MEVVILAAGQ…VSETLGVNSK (225 aa)) is pyrophosphorylase. UDP-N-acetyl-alpha-D-glucosamine is bound by residues 6-9 (LAAG), Lys20, Gln71, 76-77 (GT), 98-100 (YGD), Gly135, Glu150, Asn165, and Asn223. Asp100 provides a ligand contact to Mg(2+). Residue Asn223 coordinates Mg(2+). The segment at 226-246 (PQLAELERIHQRNIAQRLMED) is linker. The interval 247 to 452 (GVTLIDPARI…AGWKRPVKQR (206 aa)) is N-acetyltransferase. Residues Arg329 and Lys347 each contribute to the UDP-N-acetyl-alpha-D-glucosamine site. His359 acts as the Proton acceptor in catalysis. Residues Tyr362 and Asn373 each coordinate UDP-N-acetyl-alpha-D-glucosamine. Acetyl-CoA is bound by residues Ala376, 382–383 (NY), Ser401, Ala419, and Arg436.

It in the N-terminal section; belongs to the N-acetylglucosamine-1-phosphate uridyltransferase family. In the C-terminal section; belongs to the transferase hexapeptide repeat family. Homotrimer. Mg(2+) is required as a cofactor.

The protein resides in the cytoplasm. It catalyses the reaction alpha-D-glucosamine 1-phosphate + acetyl-CoA = N-acetyl-alpha-D-glucosamine 1-phosphate + CoA + H(+). It carries out the reaction N-acetyl-alpha-D-glucosamine 1-phosphate + UTP + H(+) = UDP-N-acetyl-alpha-D-glucosamine + diphosphate. It participates in nucleotide-sugar biosynthesis; UDP-N-acetyl-alpha-D-glucosamine biosynthesis; N-acetyl-alpha-D-glucosamine 1-phosphate from alpha-D-glucosamine 6-phosphate (route II): step 2/2. The protein operates within nucleotide-sugar biosynthesis; UDP-N-acetyl-alpha-D-glucosamine biosynthesis; UDP-N-acetyl-alpha-D-glucosamine from N-acetyl-alpha-D-glucosamine 1-phosphate: step 1/1. Its pathway is bacterial outer membrane biogenesis; LPS lipid A biosynthesis. Catalyzes the last two sequential reactions in the de novo biosynthetic pathway for UDP-N-acetylglucosamine (UDP-GlcNAc). The C-terminal domain catalyzes the transfer of acetyl group from acetyl coenzyme A to glucosamine-1-phosphate (GlcN-1-P) to produce N-acetylglucosamine-1-phosphate (GlcNAc-1-P), which is converted into UDP-GlcNAc by the transfer of uridine 5-monophosphate (from uridine 5-triphosphate), a reaction catalyzed by the N-terminal domain. This chain is Bifunctional protein GlmU, found in Azoarcus sp. (strain BH72).